Consider the following 342-residue polypeptide: Isopentenyl-diphosphate delta-isomerase (342 aa).

Residue 11 to 12 participates in substrate binding; it reads RK. FMN-binding positions include S68, 69-71, S99, and N127; that span reads SMT. A substrate-binding site is contributed by 99-101; sequence SMR. Q162 lines the substrate pocket. Residue E163 participates in Mg(2+) binding. Residues K194, T224, 274 to 276, and 295 to 296 contribute to the FMN site; these read GLK and AG.

It belongs to the IPP isomerase type 2 family. As to quaternary structure, homooctamer. Dimer of tetramers. The cofactor is FMN. NADPH serves as cofactor. Requires Mg(2+) as cofactor.

It localises to the cytoplasm. The enzyme catalyses isopentenyl diphosphate = dimethylallyl diphosphate. Its function is as follows. Involved in the biosynthesis of isoprenoids. Catalyzes the 1,3-allylic rearrangement of the homoallylic substrate isopentenyl (IPP) to its allylic isomer, dimethylallyl diphosphate (DMAPP). The sequence is that of Isopentenyl-diphosphate delta-isomerase from Rickettsia akari (strain Hartford).